The chain runs to 213 residues: Cell wall protein PGA62 (213 aa).

The signal sequence occupies residues 1-18 (MQFSSAVVLSAVAGSALA). Asn-22 is a glycosylation site (N-linked (GlcNAc...) asparagine). The tract at residues 120–194 (CPLPSTEAPG…APAVSTAEAG (75 aa)) is disordered. Residues 145-172 (PVPTTAAESSPAKTTAAESSPAQETTPK) show a composition bias toward polar residues. The span at 173 to 194 (TVAAESSSAETTAPAVSTAEAG) shows a compositional bias: low complexity. Residue Gly-194 is the site of GPI-anchor amidated glycine attachment. The propeptide at 195-213 (AAANAVPVAAGLLALAALF) is removed in mature form.

The protein belongs to the HWP1 family. Post-translationally, N- and O-glycosylated. The GPI-anchor is attached to the protein in the endoplasmic reticulum and serves to target the protein to the cell surface. There, the glucosamine-inositol phospholipid moiety is cleaved off and the GPI-modified mannoprotein is covalently attached via its lipidless GPI glycan remnant to the 1,6-beta-glucan of the outer cell wall layer.

The protein resides in the secreted. It localises to the cell wall. The protein localises to the membrane. Cell wall protein necessary for cell wall integrity. Plays only a minor role in hyphal morphogenesis and is not critical to biofilm formation. The sequence is that of Cell wall protein PGA62 (PGA62) from Candida albicans (strain SC5314 / ATCC MYA-2876) (Yeast).